The chain runs to 518 residues: Sensor protein kinase HptS (518 aa).

2 helical membrane-spanning segments follow: residues 20–40 and 222–242; these read IFPVFLVIIIGLVSFYAIYIW and GITLLIVMAVVLVLLVIFGFI. Residues 297-513 form the Histidine kinase domain; the sequence is EQLIHSIEHT…LICYKIPLSR (217 aa). Residue His-325 is modified to Phosphohistidine; by autocatalysis.

Autophosphorylated.

The protein resides in the cell membrane. The catalysed reaction is ATP + protein L-histidine = ADP + protein N-phospho-L-histidine.. Member of the two-component regulatory system HptS/HptR that regulates genes involved in hexose phosphate transport system in response to changes in extracellular phosphate sources. May act as a sensor protein kinase which is autophosphorylated at a histidine residue and transfers its phosphate group to the conserved aspartic acid residue in the regulatory domain of HptS. In turn, HptS antagonizes CcpA-dependent transcription of a subset of CcpA-regulated genes involved in antibiotic susceptibility. The chain is Sensor protein kinase HptS (hptS) from Staphylococcus aureus (strain MRSA252).